The primary structure comprises 103 residues: uncharacterized protein (103 aa).

This is an uncharacterized protein from Caenorhabditis elegans.